Here is a 209-residue protein sequence, read N- to C-terminus: Ribonuclease HII (209 aa).

In terms of domain architecture, RNase H type-2 spans 19-208 (GLVAGVDEAG…VARALQAPVA (190 aa)). D25, E26, and D117 together coordinate a divalent metal cation.

This sequence belongs to the RNase HII family. Mn(2+) is required as a cofactor. Mg(2+) serves as cofactor.

It localises to the cytoplasm. The enzyme catalyses Endonucleolytic cleavage to 5'-phosphomonoester.. In terms of biological role, endonuclease that specifically degrades the RNA of RNA-DNA hybrids. This chain is Ribonuclease HII, found in Acidovorax ebreus (strain TPSY) (Diaphorobacter sp. (strain TPSY)).